Here is a 377-residue protein sequence, read N- to C-terminus: 4-hydroxy-3-methylbut-2-en-1-yl diphosphate synthase (flavodoxin) (377 aa).

[4Fe-4S] cluster-binding residues include cysteine 275, cysteine 278, cysteine 310, and glutamate 317.

The protein belongs to the IspG family. The cofactor is [4Fe-4S] cluster.

It catalyses the reaction (2E)-4-hydroxy-3-methylbut-2-enyl diphosphate + oxidized [flavodoxin] + H2O + 2 H(+) = 2-C-methyl-D-erythritol 2,4-cyclic diphosphate + reduced [flavodoxin]. The protein operates within isoprenoid biosynthesis; isopentenyl diphosphate biosynthesis via DXP pathway; isopentenyl diphosphate from 1-deoxy-D-xylulose 5-phosphate: step 5/6. Functionally, converts 2C-methyl-D-erythritol 2,4-cyclodiphosphate (ME-2,4cPP) into 1-hydroxy-2-methyl-2-(E)-butenyl 4-diphosphate. This is 4-hydroxy-3-methylbut-2-en-1-yl diphosphate synthase (flavodoxin) from Ruegeria sp. (strain TM1040) (Silicibacter sp.).